We begin with the raw amino-acid sequence, 969 residues long: MSAGPGWEPCTKRPRWGAAGTSAPTASDSRSFPGRQRRVLDPKDAPVQFRVPPSSPACVSGRAGPHRGNATSFVFKQKTITTWMDTKGPKTAESESKENNNTRIDSMMSSVQKDNFYPHKVEKLENVPQLNLDKSPTEKSSQYLNQQQTASVCKWQNEGKHAEQLLASEPPAGTPLPKQLSNANIGQSPHTDDHSDTDHEEDRDNQQFLTPIKLANTKPTVGDGQARSNCKCSGSRQSVKDCTGCQQEEVDVLPESPLSDVGAEDIGTGPKNDNKLTGQESSLGDSPPFEKESEPESPMDVDNSKNSCQDSEADEETSPVFDEQDDRSSQTANKLSSCQAREADGDLRKRYLTKGSEVRLHFQFEGENNAGTSDLNAKPSGNSSSLNVECRSSKQHGKRDSKITDHFMRISKSEDRRKEQCEVRHQRTERKIPKYIPPNLPPEKKWLGTPIEEMRKMPRCGIHLPSLRPSASHTVTVRVDLLRAGEVPKPFPTHYKDLWDNKHVKMPCSEQNLYPVEDENGERTAGSRWELIQTALLNKFTRPQNLKDAILKYNVAYSKKWDFTALVDFWDKVLEEAEAQHLYQSILPDMVKIALCLPNICTQPIPLLKQKMNHSVTMSQEQIASLLANAFFCTFPRRNAKMKSEYSSYPDINFNRLFEGRSSRKPEKLKTLFCYFRRVTEKKPTGLVTFTRQSLEDFPEWERCEKPLTRLHVTYEGTIEGNGRGMLQVDFANRFVGGGVTGAGLVQEEIRFLINPELIVSRLFTEVLDHNECLIITGTEQYSEYTGYAETYRWARSHEDGSEKDDWQRRCTEIVAIDALHFRRYLDQFVPEKVRRELNKAYCGFLRPGVPSENLSAVATGNWGCGAFGGDARLKALIQILAAAAAERDVVYFTFGDSELMRDIYSMHTFLTERKLDVGKVYKLLLRYYNEECRNCSTPGPDIKLYPFIYHAVESSAETTDMPGQKAGT.

3 disordered regions span residues 1-149 (MSAG…QQQT), 161-341 (HAEQ…CQAR), and 368-400 (NNAGTSDLNAKPSGNSSSLNVECRSSKQHGKRD). An A-domain region spans residues 1–449 (MSAGPGWEPC…LPPEKKWLGT (449 aa)). The Nuclear localization signal motif lies at 10 to 16 (CTKRPRW). A compositionally biased stretch (polar residues) spans 69–84 (NATSFVFKQKTITTWM). Positions 77-84 (QKTITTWM) match the PIP-box (PCNA interacting peptide) motif. Residues 87–100 (KGPKTAESESKENN) show a composition bias toward basic and acidic residues. The span at 101 to 113 (NTRIDSMMSSVQK) shows a compositional bias: polar residues. A compositionally biased stretch (basic and acidic residues) spans 116–125 (FYPHKVEKLE). 2 stretches are compositionally biased toward polar residues: residues 128–149 (PQLNLDKSPTEKSSQYLNQQQT) and 179–189 (QLSNANIGQSP). Position 135 is a phosphoserine (serine 135). Threonine 137 bears the Phosphothreonine mark. Over residues 190–205 (HTDDHSDTDHEEDRDN) the composition is skewed to basic and acidic residues. Phosphoserine is present on serine 195. Threonine 197 bears the Phosphothreonine mark. A compositionally biased stretch (polar residues) spans 226–237 (ARSNCKCSGSRQ). A phosphoserine mark is found at serine 256, serine 259, serine 281, serine 286, serine 293, serine 297, and serine 311. The span at 275 to 284 (KLTGQESSLG) shows a compositional bias: polar residues. Residues 311-325 (SEADEETSPVFDEQD) show a composition bias toward acidic residues. Polar residues-rich tracts occupy residues 329–339 (SQTANKLSSCQ) and 369–387 (NAGTSDLNAKPSGNSSSLN). Lysine 334 is subject to N6-acetyllysine. The segment at 603-788 (QPIPLLKQKM…TEQYSEYTGY (186 aa)) is catalytic. Residue 719–720 (IE) coordinates substrate. Residue aspartate 730 is part of the active site. Substrate is bound by residues asparagine 733 and glutamine 747. Active-site residues include glutamate 748 and glutamate 749. Substrate is bound by residues tyrosine 788 and 862–867 (NWGCGA).

This sequence belongs to the poly(ADP-ribose) glycohydrolase family. Interacts with PCNA. Interacts with NUDT5.

It localises to the nucleus. The catalysed reaction is [(1''-&gt;2')-ADP-alpha-D-ribose](n) + H2O = [(1''-&gt;2')-ADP-alpha-D-ribose](n-1) + ADP-D-ribose. In terms of biological role, poly(ADP-ribose) glycohydrolase that degrades poly(ADP-ribose) by hydrolyzing the ribose-ribose bonds present in poly(ADP-ribose). PARG acts both as an endo- and exoglycosidase, releasing poly(ADP-ribose) of different length as well as ADP-ribose monomers. It is however unable to cleave the ester bond between the terminal ADP-ribose and ADP-ribosylated residues, leaving proteins that are mono-ADP-ribosylated. Poly(ADP-ribose) is synthesized after DNA damage is only present transiently and is rapidly degraded by PARG. Required to prevent detrimental accumulation of poly(ADP-ribose) upon prolonged replicative stress, while it is not required for recovery from transient replicative stress. Responsible for the prevalence of mono-ADP-ribosylated proteins in cells, thanks to its ability to degrade poly(ADP-ribose) without cleaving the terminal protein-ribose bond. Required for retinoid acid-dependent gene transactivation, probably by removing poly(ADP-ribose) from histone demethylase KDM4D, allowing chromatin derepression at RAR-dependent gene promoters. Involved in the synthesis of ATP in the nucleus, together with PARP1, NMNAT1 and NUDT5. Nuclear ATP generation is required for extensive chromatin remodeling events that are energy-consuming. The chain is Poly(ADP-ribose) glycohydrolase from Mus musculus (Mouse).